Consider the following 326-residue polypeptide: Probable protein phosphatase 2C 61 (326 aa).

A PPM-type phosphatase domain is found at leucine 42 to leucine 316. Residues aspartate 77, glycine 78, aspartate 261, and aspartate 307 each contribute to the Mn(2+) site.

This sequence belongs to the PP2C family. Mg(2+) serves as cofactor. The cofactor is Mn(2+).

The enzyme catalyses O-phospho-L-seryl-[protein] + H2O = L-seryl-[protein] + phosphate. The catalysed reaction is O-phospho-L-threonyl-[protein] + H2O = L-threonyl-[protein] + phosphate. This is Probable protein phosphatase 2C 61 from Arabidopsis thaliana (Mouse-ear cress).